We begin with the raw amino-acid sequence, 172 residues long: Ribosome maturation factor RimM (172 aa).

The PRC barrel domain occupies 96 to 168 (DGEFYYHEII…RVDVELLEGL (73 aa)).

This sequence belongs to the RimM family. In terms of assembly, binds ribosomal protein uS19.

It localises to the cytoplasm. Functionally, an accessory protein needed during the final step in the assembly of 30S ribosomal subunit, possibly for assembly of the head region. Essential for efficient processing of 16S rRNA. May be needed both before and after RbfA during the maturation of 16S rRNA. It has affinity for free ribosomal 30S subunits but not for 70S ribosomes. The chain is Ribosome maturation factor RimM from Streptococcus suis (strain 05ZYH33).